Reading from the N-terminus, the 369-residue chain is MSETSLLPRAHGAAVLSAAMRSTPDDFQLDELPAFEPSGEGEHLLLTVRKRGQNTAYIAKQLAHWAGIAEMGVSYAGLKDRHAVTTQRFSVHLPKRIAPDIAALDDAQMQVVQSAWHNRKLQRGALHGNRFVLTLRQVQGEREAIEQRLQAIAARGIPNWFGEQRFGRDGANVAAALAMFGHVQAEDGTLLPAPTSRRRLRNDQRSMLLSAARSVLFNRVLGARVAQGSWDSALQGEAWMLDGSRSVFGPEPWSEALAERLARFDIHPSGPLWGVGDLRSADQAAALEQGALSDPQSEALRQGLEAAGLKQERRALRLRPQGLDYRWLEAQTLQLEFALPPGCYATAVLWELGDVTDAGRFNVGMRADA.

D80 serves as the catalytic Nucleophile. The 163-residue stretch at G156–L318 folds into the TRUD domain.

This sequence belongs to the pseudouridine synthase TruD family.

The enzyme catalyses uridine(13) in tRNA = pseudouridine(13) in tRNA. Its function is as follows. Responsible for synthesis of pseudouridine from uracil-13 in transfer RNAs. The chain is tRNA pseudouridine synthase D from Xanthomonas euvesicatoria pv. vesicatoria (strain 85-10) (Xanthomonas campestris pv. vesicatoria).